The primary structure comprises 109 residues: Ribonuclease P protein component 2 (109 aa).

It belongs to the eukaryotic/archaeal RNase P protein component 2 family. As to quaternary structure, consists of a catalytic RNA component and at least 4-5 protein subunits.

Its subcellular location is the cytoplasm. The enzyme catalyses Endonucleolytic cleavage of RNA, removing 5'-extranucleotides from tRNA precursor.. Its function is as follows. Part of ribonuclease P, a protein complex that generates mature tRNA molecules by cleaving their 5'-ends. The protein is Ribonuclease P protein component 2 of Archaeoglobus fulgidus (strain ATCC 49558 / DSM 4304 / JCM 9628 / NBRC 100126 / VC-16).